A 333-amino-acid chain; its full sequence is Glyceraldehyde-3-phosphate dehydrogenase (333 aa).

Residues 11 to 12, D35, and T121 each bind NAD(+); that span reads RI. D-glyceraldehyde 3-phosphate contacts are provided by residues 151–153 and T182; that span reads SCT. C152 serves as the catalytic Nucleophile. N183 provides a ligand contact to NAD(+). D-glyceraldehyde 3-phosphate contacts are provided by residues R197, 210–211, and R233; that span reads TG. Position 315 (N315) interacts with NAD(+).

It belongs to the glyceraldehyde-3-phosphate dehydrogenase family. As to quaternary structure, homotetramer.

It is found in the cytoplasm. It carries out the reaction D-glyceraldehyde 3-phosphate + phosphate + NAD(+) = (2R)-3-phospho-glyceroyl phosphate + NADH + H(+). Its pathway is carbohydrate degradation; glycolysis; pyruvate from D-glyceraldehyde 3-phosphate: step 1/5. Functionally, catalyzes the oxidative phosphorylation of glyceraldehyde 3-phosphate (G3P) to 1,3-bisphosphoglycerate (BPG) using the cofactor NAD. The first reaction step involves the formation of a hemiacetal intermediate between G3P and a cysteine residue, and this hemiacetal intermediate is then oxidized to a thioester, with concomitant reduction of NAD to NADH. The reduced NADH is then exchanged with the second NAD, and the thioester is attacked by a nucleophilic inorganic phosphate to produce BPG. In Thermotoga maritima (strain ATCC 43589 / DSM 3109 / JCM 10099 / NBRC 100826 / MSB8), this protein is Glyceraldehyde-3-phosphate dehydrogenase (gap).